The following is a 313-amino-acid chain: Glutathionyl-hydroquinone reductase PcpF (313 aa).

Residue Cys53 is the Nucleophile of the active site. Residues Trp86, 119–122 (RVTI), and 137–138 (ES) each bind glutathione. Positions 161 to 285 (PAEFRPEIDR…INLRHAKAHY (125 aa)) constitute a GST C-terminal domain. Catalysis depends on Tyr184, which acts as the Proton donor/acceptor.

This sequence belongs to the GST superfamily. Xi-class GSH transferase family. Homodimer.

The enzyme catalyses 2-(glutathione-S-yl)-hydroquinone + glutathione = hydroquinone + glutathione disulfide. Its function is as follows. Catalyzes glutathione (GSH)-dependent reduction of glutathionyl-hydroquinones (GS-HQs) to the corresponding hydroquinones. Can act on halogenated substrates such as GS-2,6-dichloro-p-hydroquinone (GS-DiCH) and GS-trichloro-p-hydroquinone (GS-TriCH). Involved in the degradation of pentachlorophenol (PCP), a toxic pollutant. The polypeptide is Glutathionyl-hydroquinone reductase PcpF (Sphingobium chlorophenolicum).